The sequence spans 228 residues: UPF0758 protein MW1604 (228 aa).

Residues 102–224 (KITQPSDVAD…FTSLVEAGYF (123 aa)) form the MPN domain. Zn(2+)-binding residues include H173, H175, and D186. The short motif at 173-186 (HNHPSGDVTPSQED) is the JAMM motif element.

Belongs to the UPF0758 family.

This is UPF0758 protein MW1604 from Staphylococcus aureus (strain MW2).